Here is a 558-residue protein sequence, read N- to C-terminus: Putative polypeptide N-acetylgalactosaminyltransferase 13 (558 aa).

Topologically, residues 1 to 12 (MHAGGKYCGPRH) are cytoplasmic. A helical; Signal-anchor for type II membrane protein transmembrane segment spans residues 13 to 32 (CSFYIIAFLICQLFFLVIFI). At 33–558 (RNDDASSANE…QFALEMEGQT (526 aa)) the chain is on the lumenal side. N-linked (GlcNAc...) asparagine glycans are attached at residues Asn-48 and Asn-111. 4 disulfides stabilise this stretch: Cys-97/Cys-335, Cys-326/Cys-412, Cys-445/Cys-460, and Cys-484/Cys-498. The catalytic subdomain A stretch occupies residues 109–225 (EANVSVVISF…EGWLEPLLER (117 aa)). The substrate site is built by Asp-150 and Arg-186. Asp-209 contributes to the Mn(2+) binding site. Ser-210 contributes to the substrate binding site. Residue His-211 participates in Mn(2+) binding. The catalytic subdomain B stretch occupies residues 281-343 (PYQSPAFAGG…PCSRIGHIFR (63 aa)). Position 312 (Trp-312) interacts with substrate. His-340 contributes to the Mn(2+) binding site. Positions 343 and 346 each coordinate substrate. The region spanning 422 to 556 (VSPELRMHFD…SFQFALEMEG (135 aa)) is the Ricin B-type lectin domain. A glycan (N-linked (GlcNAc...) asparagine) is linked at Asn-501. Cys-525 and Cys-539 form a disulfide bridge.

The protein belongs to the glycosyltransferase 2 family. GalNAc-T subfamily. Mn(2+) serves as cofactor. In terms of tissue distribution, during embryonic stages 16-17, very weak expression in the midgut.

It is found in the golgi apparatus membrane. It carries out the reaction L-seryl-[protein] + UDP-N-acetyl-alpha-D-galactosamine = a 3-O-[N-acetyl-alpha-D-galactosaminyl]-L-seryl-[protein] + UDP + H(+). The catalysed reaction is L-threonyl-[protein] + UDP-N-acetyl-alpha-D-galactosamine = a 3-O-[N-acetyl-alpha-D-galactosaminyl]-L-threonyl-[protein] + UDP + H(+). It functions in the pathway protein modification; protein glycosylation. Its function is as follows. May catalyze the initial reaction in O-linked oligosaccharide biosynthesis, the transfer of an N-acetyl-D-galactosamine residue to a serine or threonine residue on the protein receptor. The protein is Putative polypeptide N-acetylgalactosaminyltransferase 13 (pgant13) of Drosophila melanogaster (Fruit fly).